The primary structure comprises 91 residues: MWHSVGLTLLVFVATLLIVLLLMVCGWYFVWHLFLSKFKFLRELVGDTGSQEGDHEPSGSETEEDTSSSPHRIRSARQRRAPADEGHRPLT.

The chain crosses the membrane as a helical span at residues 10 to 30 (LVFVATLLIVLLLMVCGWYFV). The interval 47–91 (DTGSQEGDHEPSGSETEEDTSSSPHRIRSARQRRAPADEGHRPLT) is disordered. Phosphoserine occurs at positions 58 and 60. Thr62 is modified (phosphothreonine). Position 69 is a phosphoserine (Ser69). Positions 71–80 (HRIRSARQRR) are enriched in basic residues. Basic and acidic residues predominate over residues 81-91 (APADEGHRPLT).

It belongs to the SMIM13 family.

It is found in the membrane. This chain is Small integral membrane protein 13 (SMIM13), found in Homo sapiens (Human).